A 456-amino-acid polypeptide reads, in one-letter code: UDP-glycosyltransferase 84B1 (456 aa).

UDP-alpha-D-glucose contacts are provided by residues Ser278, Ser332–Gln334, His349–Glu357, and Trp371–Gln374.

Belongs to the UDP-glycosyltransferase family.

Possesses low quercetin 7-O-glucosyltransferase activity in vitro. The sequence is that of UDP-glycosyltransferase 84B1 (UGT84B1) from Arabidopsis thaliana (Mouse-ear cress).